The following is a 223-amino-acid chain: Ribonuclease HII (223 aa).

One can recognise an RNase H type-2 domain in the interval 1-219; it reads MMIAGIDEAG…VENIREELEK (219 aa). The a divalent metal cation site is built by Asp-7, Glu-8, and Asp-105.

This sequence belongs to the RNase HII family. It depends on Mn(2+) as a cofactor. Mg(2+) is required as a cofactor.

Its subcellular location is the cytoplasm. It catalyses the reaction Endonucleolytic cleavage to 5'-phosphomonoester.. In terms of biological role, endonuclease that specifically degrades the RNA of RNA-DNA hybrids. The protein is Ribonuclease HII of Methanosarcina acetivorans (strain ATCC 35395 / DSM 2834 / JCM 12185 / C2A).